The primary structure comprises 340 residues: Speriolin-like protein (340 aa).

Disordered regions lie at residues G42 to S73 and A94 to P135. S60 carries the post-translational modification Phosphoserine. The segment covering P123–L133 has biased composition (basic and acidic residues). Position 134 is a phosphoserine (S134).

It belongs to the speriolin family.

The protein localises to the cytoplasm. This is Speriolin-like protein (SPATC1L) from Homo sapiens (Human).